The chain runs to 595 residues: DNA mismatch repair protein MutL (595 aa).

The protein belongs to the DNA mismatch repair MutL/HexB family.

Its function is as follows. This protein is involved in the repair of mismatches in DNA. It is required for dam-dependent methyl-directed DNA mismatch repair. May act as a 'molecular matchmaker', a protein that promotes the formation of a stable complex between two or more DNA-binding proteins in an ATP-dependent manner without itself being part of a final effector complex. This is DNA mismatch repair protein MutL from Rhodopseudomonas palustris (strain ATCC BAA-98 / CGA009).